The sequence spans 257 residues: Imidazole glycerol phosphate synthase subunit HisF (257 aa).

Catalysis depends on residues D11 and D130.

It belongs to the HisA/HisF family. Heterodimer of HisH and HisF.

The protein resides in the cytoplasm. The enzyme catalyses 5-[(5-phospho-1-deoxy-D-ribulos-1-ylimino)methylamino]-1-(5-phospho-beta-D-ribosyl)imidazole-4-carboxamide + L-glutamine = D-erythro-1-(imidazol-4-yl)glycerol 3-phosphate + 5-amino-1-(5-phospho-beta-D-ribosyl)imidazole-4-carboxamide + L-glutamate + H(+). It functions in the pathway amino-acid biosynthesis; L-histidine biosynthesis; L-histidine from 5-phospho-alpha-D-ribose 1-diphosphate: step 5/9. In terms of biological role, IGPS catalyzes the conversion of PRFAR and glutamine to IGP, AICAR and glutamate. The HisF subunit catalyzes the cyclization activity that produces IGP and AICAR from PRFAR using the ammonia provided by the HisH subunit. This is Imidazole glycerol phosphate synthase subunit HisF from Aeromonas salmonicida (strain A449).